A 943-amino-acid chain; its full sequence is Isoleucine--tRNA ligase (943 aa).

Positions 59-69 (PYANGQIHLGH) match the 'HIGH' region motif. Glu577 lines the L-isoleucyl-5'-AMP pocket. The 'KMSKS' region signature appears at 618 to 622 (KMSKS). Lys621 is a binding site for ATP. Residues Cys906, Cys909, Cys926, and Cys929 each coordinate Zn(2+).

Belongs to the class-I aminoacyl-tRNA synthetase family. IleS type 1 subfamily. As to quaternary structure, monomer. It depends on Zn(2+) as a cofactor.

The protein resides in the cytoplasm. The catalysed reaction is tRNA(Ile) + L-isoleucine + ATP = L-isoleucyl-tRNA(Ile) + AMP + diphosphate. Functionally, catalyzes the attachment of isoleucine to tRNA(Ile). As IleRS can inadvertently accommodate and process structurally similar amino acids such as valine, to avoid such errors it has two additional distinct tRNA(Ile)-dependent editing activities. One activity is designated as 'pretransfer' editing and involves the hydrolysis of activated Val-AMP. The other activity is designated 'posttransfer' editing and involves deacylation of mischarged Val-tRNA(Ile). In Xanthomonas axonopodis pv. citri (strain 306), this protein is Isoleucine--tRNA ligase.